Consider the following 344-residue polypeptide: GTPase Obg (344 aa).

Positions 1–159 (MKFLDLCKVY…RTLWLRLKLI (159 aa)) constitute an Obg domain. The segment at 126-146 (GNLHFKSSTNQAPRRSNPGQD) is disordered. The span at 130 to 144 (FKSSTNQAPRRSNPG) shows a compositional bias: polar residues. In terms of domain architecture, OBG-type G spans 160-327 (ADVGLLGLPN…VLRKLRGEIS (168 aa)). GTP contacts are provided by residues 166–173 (GLPNAGKS), 191–195 (FTTLH), 212–215 (DIPG), 279–282 (NKID), and 308–310 (SGV). The Mg(2+) site is built by Ser-173 and Thr-193.

This sequence belongs to the TRAFAC class OBG-HflX-like GTPase superfamily. OBG GTPase family. In terms of assembly, monomer. Requires Mg(2+) as cofactor.

It localises to the cytoplasm. In terms of biological role, an essential GTPase which binds GTP, GDP and possibly (p)ppGpp with moderate affinity, with high nucleotide exchange rates and a fairly low GTP hydrolysis rate. Plays a role in control of the cell cycle, stress response, ribosome biogenesis and in those bacteria that undergo differentiation, in morphogenesis control. This is GTPase Obg from Roseobacter denitrificans (strain ATCC 33942 / OCh 114) (Erythrobacter sp. (strain OCh 114)).